A 302-amino-acid polypeptide reads, in one-letter code: Dermonecrotic toxin LiSicTox-alphaIA2bii (302 aa).

A signal peptide spans 1 to 14 (IALILVCWSVLSQA). The propeptide occupies 15-22 (AQTDVEGR). H34 is an active-site residue. Residues E54 and D56 each contribute to the Mg(2+) site. H70 acts as the Nucleophile in catalysis. 2 disulfides stabilise this stretch: C74/C80 and C76/C219. D114 is a Mg(2+) binding site. The N-linked (GlcNAc...) asparagine glycan is linked to N279.

This sequence belongs to the arthropod phospholipase D family. Class II subfamily. Requires Mg(2+) as cofactor. As to expression, expressed by the venom gland.

The protein resides in the secreted. The catalysed reaction is an N-(acyl)-sphingosylphosphocholine = an N-(acyl)-sphingosyl-1,3-cyclic phosphate + choline. The enzyme catalyses an N-(acyl)-sphingosylphosphoethanolamine = an N-(acyl)-sphingosyl-1,3-cyclic phosphate + ethanolamine. It catalyses the reaction a 1-acyl-sn-glycero-3-phosphocholine = a 1-acyl-sn-glycero-2,3-cyclic phosphate + choline. It carries out the reaction a 1-acyl-sn-glycero-3-phosphoethanolamine = a 1-acyl-sn-glycero-2,3-cyclic phosphate + ethanolamine. Dermonecrotic toxins cleave the phosphodiester linkage between the phosphate and headgroup of certain phospholipids (sphingolipid and lysolipid substrates), forming an alcohol (often choline) and a cyclic phosphate. This toxin acts on sphingomyelin (SM). It may also act on ceramide phosphoethanolamine (CPE), lysophosphatidylcholine (LPC) and lysophosphatidylethanolamine (LPE), but not on lysophosphatidylserine (LPS), and lysophosphatidylglycerol (LPG). It acts by transphosphatidylation, releasing exclusively cyclic phosphate products as second products. Induces dermonecrosis, hemolysis, increased vascular permeability, edema, inflammatory response, and platelet aggregation. In Loxosceles intermedia (Brown spider), this protein is Dermonecrotic toxin LiSicTox-alphaIA2bii.